The following is a 43-amino-acid chain: Iota-conotoxin-like Fi11.6 (43 aa).

4 disulfides stabilise this stretch: C2-C16, C9-C19, C15-C24, and C18-C35. At P8 the chain carries 4-hydroxyproline. Residue P26 is modified to 4-hydroxyproline. At W30 the chain carries 6'-bromotryptophan. D-phenylalanine is present on F41.

Belongs to the conotoxin I1 superfamily. As to expression, expressed by the venom duct.

It localises to the secreted. Functionally, iota-conotoxins bind to voltage-gated sodium channels (Nav) and act as agonists by shifting the voltage-dependence of activation to more hyperpolarized levels. Produces general excitatory symptoms. In Conus figulinus (Fig cone), this protein is Iota-conotoxin-like Fi11.6.